Here is a 470-residue protein sequence, read N- to C-terminus: Angiopoietin-related protein 6 (470 aa).

Residues 1-20 (MGKPWLRALQLLLLLGASWA) form the signal peptide. N58 is a glycosylation site (N-linked (GlcNAc...) asparagine). Residues 59–116 (ASELAALRMRVGRHEELLRELQRLAAADGAVAGEVRALRKESRGLSARLGQLRAQLQH) are a coiled coil. N145 carries an N-linked (GlcNAc...) (complex) asparagine glycan. A disordered region spans residues 214–249 (SDTSRMLDPAPEPQRDQTQRQQEPMASPMPAGHPAV). Residues 251-469 (TKPVGPWQDC…KAAMLIRPLK (219 aa)) enclose the Fibrinogen C-terminal domain. Cystine bridges form between C260–C287 and C410–C423.

It localises to the secreted. In terms of biological role, may play a role in the wound healing process. May promote epidermal proliferation, remodeling and regeneration. May promote the chemotactic activity of endothelial cells and induce neovascularization. May counteract high-fat diet-induced obesity and related insulin resistance through increased energy expenditure. This Homo sapiens (Human) protein is Angiopoietin-related protein 6 (ANGPTL6).